The chain runs to 1019 residues: Photoactivated adenylate cyclase subunit alpha-like protein ST- (1019 aa).

The 94-residue stretch at 55–148 folds into the BLUF 1 domain; sequence LRRLMYLSAS…GRMYGEWHMK (94 aa). Residues 204 to 332 enclose the Guanylate cyclase 1 domain; that stretch reads VLTFIYLVEF…DCINTASRIT (129 aa). Residues 467–559 form the BLUF 2 domain; it reads LITLTYISQA…RVYGTPLDMT (93 aa). In terms of domain architecture, Guanylate cyclase 2 spans 615 to 744; the sequence is VMLATDICSF…EVSARVMAVE (130 aa). Disordered regions lie at residues 801–846, 887–923, and 963–993; these read EDHL…TRPH, QIAA…DQPA, and EGHR…NRAT. Positions 821-834 are enriched in basic residues; that stretch reads RHQRPGPGRPRRGH.

This sequence belongs to the adenylyl cyclase class-4/guanylyl cyclase family. As to quaternary structure, heterotetramer of two alpha and two beta subunits.

It is found in the cell projection. Its subcellular location is the cilium. The protein localises to the flagellum. This is Photoactivated adenylate cyclase subunit alpha-like protein ST- from Euglena gracilis.